Here is a 431-residue protein sequence, read N- to C-terminus: MGKNVVVLGTQWGDEGKGKIVDLLTEQAKYVVRYQGGHNAGHTLVIDGDKTVLHLIPSGILRDNVKCIIGNGVVLAPDALMKEINMLKERGVPVEERLLISEACPLILPFHCALDIAREKARGNKAIGTTGRGIGPAYEDKISRRGLRVGDLFNAELFAEKLKEVMAYHNFMLTEYYGCEAVDYETTLKDALAIADYLKSMCTDVTELLDQARKNGDNILFEGAQGTLLDIDHGTYPFVTSSNTTAGGVATGSGFGPRHLDYVCGIIKAYTTRVGAGPFPTELRDEIGDHLGTKGQEFGATTGRKRRPGWLDIVAMKRAVQINSISGFCLTKLDVLDGLKEVKLCVGYQYPDGSISTVTPLAAEGYEQVTPVLETMPGWSESTFGATSIDQLPQAALDYIKRIEELLETPVDIISTGPDRNETMILVNPFS.

Residues 13–19 (GDEGKGK) and 41–43 (GHT) each bind GTP. Asp-14 functions as the Proton acceptor in the catalytic mechanism. Mg(2+)-binding residues include Asp-14 and Gly-41. Residues 14–17 (DEGK), 39–42 (NAGH), Thr-130, Arg-144, Gln-225, Thr-240, and Arg-304 contribute to the IMP site. The Proton donor role is filled by His-42. 300–306 (ATTGRKR) lines the substrate pocket. GTP contacts are provided by residues Arg-306, 332 to 334 (KLD), and 415 to 417 (STG).

This sequence belongs to the adenylosuccinate synthetase family. As to quaternary structure, homodimer. The cofactor is Mg(2+).

The protein resides in the cytoplasm. It catalyses the reaction IMP + L-aspartate + GTP = N(6)-(1,2-dicarboxyethyl)-AMP + GDP + phosphate + 2 H(+). It functions in the pathway purine metabolism; AMP biosynthesis via de novo pathway; AMP from IMP: step 1/2. In terms of biological role, plays an important role in the de novo pathway of purine nucleotide biosynthesis. Catalyzes the first committed step in the biosynthesis of AMP from IMP. This chain is Adenylosuccinate synthetase, found in Shewanella loihica (strain ATCC BAA-1088 / PV-4).